The sequence spans 713 residues: Ribosomal RNA large subunit methyltransferase K/L (713 aa).

In terms of domain architecture, THUMP spans 46–157 (TAYRICLWSR…RDQATLSLDL (112 aa)).

It belongs to the methyltransferase superfamily. RlmKL family.

It is found in the cytoplasm. It catalyses the reaction guanosine(2445) in 23S rRNA + S-adenosyl-L-methionine = N(2)-methylguanosine(2445) in 23S rRNA + S-adenosyl-L-homocysteine + H(+). The enzyme catalyses guanosine(2069) in 23S rRNA + S-adenosyl-L-methionine = N(2)-methylguanosine(2069) in 23S rRNA + S-adenosyl-L-homocysteine + H(+). Functionally, specifically methylates the guanine in position 2445 (m2G2445) and the guanine in position 2069 (m7G2069) of 23S rRNA. This chain is Ribosomal RNA large subunit methyltransferase K/L, found in Syntrophotalea carbinolica (strain DSM 2380 / NBRC 103641 / GraBd1) (Pelobacter carbinolicus).